The chain runs to 765 residues: Palmitoyltransferase ZDHHC8 (765 aa).

At 1-13 (MPRSPGTRLKPAK) the chain is on the cytoplasmic side. Residues 14–34 (YIPVATAAALLVGSSTLFFVF) form a helical membrane-spanning segment. Over 35-52 (TCPWLTRAVSPAVPVYNG) the chain is Lumenal. Residues 53–73 (IIFLFVLANFSMATFMDPGVF) form a helical membrane-spanning segment. Over 74–148 (PRADEDEDKE…NCIGRRNYRY (75 aa)) the chain is Cytoplasmic. The region spanning 104–154 (KWCATCHFYRPPRCSHCSVCDNCVEDFDHHCPWVNNCIGRRNYRYFFLFLL) is the DHHC domain. The S-palmitoyl cysteine intermediate role is filled by C134. Residues 149–169 (FFLFLLSLSAHMVGVVAFGLV) traverse the membrane as a helical segment. Over 170–190 (YVLNHAEGLGAAHTTITMAVM) the chain is Lumenal. Residues 191–211 (CVAGLFFIPVIGLTGFHVVLV) traverse the membrane as a helical segment. Over 212–765 (TRGRTTNEQV…VGGTTYEISV (554 aa)) the chain is Cytoplasmic. Positions 293–352 (GLGRSKSKGSLDRLDEKPLDLGPPLPPKIEAGTFSSDLQTPRPGSAESALSVQRTSPPTP) are disordered. Positions 301-311 (GSLDRLDEKPL) are enriched in basic and acidic residues. The residue at position 337 (S337) is a Phosphoserine. R441 carries the omega-N-methylarginine modification. The interval 509 to 540 (LHPGATGDPPRPLPRSFSPVLGPRPREPSPVR) is disordered. Residues S606, S627, S675, S725, and S743 each carry the phosphoserine modification. The interval 613 to 746 (GPGFGGARNP…PPGPSASPTR (134 aa)) is disordered. Low complexity predominate over residues 622–653 (PALQTSLSSLSSSVSRAPRTSSSSLQADQASS).

This sequence belongs to the DHHC palmitoyltransferase family. ERF2/ZDHHC9 subfamily.

Its subcellular location is the golgi apparatus membrane. It is found in the mitochondrion membrane. The enzyme catalyses L-cysteinyl-[protein] + hexadecanoyl-CoA = S-hexadecanoyl-L-cysteinyl-[protein] + CoA. Palmitoyltransferase that catalyzes the addition of palmitate onto various protein substrates and therefore functions in several unrelated biological processes. Through the palmitoylation of ABCA1 regulates the localization of the transporter to the plasma membrane and thereby regulates its function in cholesterol and phospholipid efflux. Could also pamitoylate the D(2) dopamine receptor DRD2 and regulate its stability and localization to the plasma membrane. Could also play a role in glutamatergic transmission. In Pan troglodytes (Chimpanzee), this protein is Palmitoyltransferase ZDHHC8.